The following is a 385-amino-acid chain: 4-hydroxy-3-methylbut-2-en-1-yl diphosphate synthase (flavodoxin) 2 (385 aa).

[4Fe-4S] cluster-binding residues include cysteine 280, cysteine 283, cysteine 315, and glutamate 322.

Belongs to the IspG family. Requires [4Fe-4S] cluster as cofactor.

It carries out the reaction (2E)-4-hydroxy-3-methylbut-2-enyl diphosphate + oxidized [flavodoxin] + H2O + 2 H(+) = 2-C-methyl-D-erythritol 2,4-cyclic diphosphate + reduced [flavodoxin]. The protein operates within isoprenoid biosynthesis; isopentenyl diphosphate biosynthesis via DXP pathway; isopentenyl diphosphate from 1-deoxy-D-xylulose 5-phosphate: step 5/6. Converts 2C-methyl-D-erythritol 2,4-cyclodiphosphate (ME-2,4cPP) into 1-hydroxy-2-methyl-2-(E)-butenyl 4-diphosphate. This chain is 4-hydroxy-3-methylbut-2-en-1-yl diphosphate synthase (flavodoxin) 2, found in Streptomyces coelicolor (strain ATCC BAA-471 / A3(2) / M145).